The chain runs to 504 residues: 5-epiaristolochene 1,3-dihydroxylase (504 aa).

Residues 2-22 (QFFSLVSIFLFLSFLFLLRKW) form a helical membrane-spanning segment. Cysteine 442 contacts heme.

Belongs to the cytochrome P450 family. The cofactor is heme.

The protein resides in the membrane. It catalyses the reaction (+)-5-epi-aristolochene + 2 reduced [NADPH--hemoprotein reductase] + 2 O2 = capsidiol + 2 oxidized [NADPH--hemoprotein reductase] + 2 H2O + 2 H(+). Inhibited by ancymidol and ketoconazole. Involved in the biosynthesis of capsidiol. Catalyzes the successive and independent hydroxylations at the C1 and C3 positions of 5-epiaristolochene. The second hydroxylation step is 8-fold more efficient than the first hydroxylation reaction. Capable of utilizing premnaspirodiene as a substrate. This chain is 5-epiaristolochene 1,3-dihydroxylase (CYP71D20), found in Nicotiana tabacum (Common tobacco).